Reading from the N-terminus, the 447-residue chain is Tubulin beta-4 chain (447 aa).

GTP contacts are provided by Gln11, Glu71, Ser140, Gly144, Thr145, Gly146, Asn206, and Asn228. Glu71 contributes to the Mg(2+) binding site. The tract at residues 428 to 447 is disordered; it reads QDATAEEYEEEEHDGEEEHA. Over residues 431–447 the composition is skewed to acidic residues; that stretch reads TAEEYEEEEHDGEEEHA.

It belongs to the tubulin family. In terms of assembly, dimer of alpha and beta chains. A typical microtubule is a hollow water-filled tube with an outer diameter of 25 nm and an inner diameter of 15 nM. Alpha-beta heterodimers associate head-to-tail to form protofilaments running lengthwise along the microtubule wall with the beta-tubulin subunit facing the microtubule plus end conferring a structural polarity. Microtubules usually have 13 protofilaments but different protofilament numbers can be found in some organisms and specialized cells. The cofactor is Mg(2+).

Its subcellular location is the cytoplasm. The protein localises to the cytoskeleton. Its function is as follows. Tubulin is the major constituent of microtubules, a cylinder consisting of laterally associated linear protofilaments composed of alpha- and beta-tubulin heterodimers. Microtubules grow by the addition of GTP-tubulin dimers to the microtubule end, where a stabilizing cap forms. Below the cap, tubulin dimers are in GDP-bound state, owing to GTPase activity of alpha-tubulin. This chain is Tubulin beta-4 chain (TUBB4), found in Zea mays (Maize).